The chain runs to 906 residues: Catenin alpha-1 (906 aa).

T2 carries the post-translational modification N-acetylthreonine. Positions 2–228 (TAVHAGNINF…PILYTASQAC (227 aa)) are involved in homodimerization. A Glycyl lysine isopeptide (Lys-Gly) (interchain with G-Cter in SUMO2) cross-link involves residue K57. Positions 97–148 (VRKQGDLMKAAAGEFADDPCSSVKRGNMVRAARALLSAVTRLLILADMADVY) are interaction with JUP and CTNNB1. Residues S264, S268, S295, and S297 each carry the phosphoserine modification. Residues 325–394 (TRDDRRERIV…AVMDHVSDSF (70 aa)) are interaction with alpha-actinin. T634 bears the Phosphothreonine mark. S641 carries the post-translational modification Phosphoserine; by CK2. Phosphothreonine is present on T645. 2 positions are modified to phosphoserine; by CK1: S652 and S655. T658 is subject to Phosphothreonine; by CK1. K797 participates in a covalent cross-link: Glycyl lysine isopeptide (Lys-Gly) (interchain with G-Cter in SUMO2). Residue S851 is modified to Phosphoserine. The segment covering 864 to 880 (PEKKPLVKREKQDETQT) has biased composition (basic and acidic residues). A disordered region spans residues 864–894 (PEKKPLVKREKQDETQTKIKRASQKKHVNPV). Basic residues predominate over residues 881 to 891 (KIKRASQKKHV).

The protein belongs to the vinculin/alpha-catenin family. In terms of assembly, monomer and homodimer; the monomer preferentially binds to CTNNB1 and the homodimer to actin. Component of an cadherin:catenin adhesion complex composed of at least of CDH26, beta-catenin/CTNNB1, alpha-catenin/CTNNA1 and p120 catenin/CTNND1. Possible component of an E-cadherin/ catenin adhesion complex together with E-cadherin/CDH1 and beta-catenin/CTNNB1 or gamma-catenin/JUP; the complex is located to adherens junctions. The stable association of CTNNA1 is controversial as CTNNA1 was shown not to bind to F-actin when assembled in the complex. Alternatively, the CTNNA1-containing complex may be linked to F-actin by other proteins such as LIMA1. Binds AFDN and F-actin. Interacts with ARHGAP21. Interacts with AJUBA. Interacts with LIMA1. Interacts with vinculin/VCL. Interacts with TJP2/ZO2 (via N-terminus). Interacts with TJP1/ZO1 (via N-terminus). Post-translationally, sumoylated. In terms of processing, phosphorylation seems to contribute to the strength of cell-cell adhesion rather than to the basic capacity for cell-cell adhesion. As to expression, ubiquitously expressed in normal tissues. Abundantly expressed in brain and cerebellum, also expressed in the placenta, liver, lung, colon, heart, pancreas, stomach and thymus.

The protein resides in the cytoplasm. It localises to the cytoskeleton. The protein localises to the cell junction. Its subcellular location is the adherens junction. It is found in the cell membrane. The protein resides in the nucleus. In terms of biological role, associates with the cytoplasmic domain of a variety of cadherins. The association of catenins to cadherins produces a complex which is linked to the actin filament network, and which seems to be of primary importance for cadherins cell-adhesion properties. Can associate with both E- and N-cadherins. Originally believed to be a stable component of E-cadherin/catenin adhesion complexes and to mediate the linkage of cadherins to the actin cytoskeleton at adherens junctions. In contrast, cortical actin was found to be much more dynamic than E-cadherin/catenin complexes and CTNNA1 was shown not to bind to F-actin when assembled in the complex suggesting a different linkage between actin and adherens junctions components. The homodimeric form may regulate actin filament assembly and inhibit actin branching by competing with the Arp2/3 complex for binding to actin filaments. Involved in the regulation of WWTR1/TAZ, YAP1 and TGFB1-dependent SMAD2 and SMAD3 nuclear accumulation. May play a crucial role in cell differentiation. This chain is Catenin alpha-1, found in Homo sapiens (Human).